The sequence spans 312 residues: MYNIKCLTKNEQAEIVKLYSSGNYTQQELADWQGVSVDTIRRVLKNAEEAKRPKVTISGDITVKVNSDAVIAPVAKSDIIWNASKKFISITVDGVTYNATPNTHSNFQEILNLLVADKLEEAAQKINVRRAVEKYISGDVRIEGGSLFYQNIELRSGLVDRILDSMEKGENFEFYFPFLENLLENPSQKAVSRLFDFLVANDIEITEDGYFYAWKVVRSNYFDCHSNTFDNSPGKVVKMPRTRVNDDDTQTCSRGLHVCSKSYIRHFGSSTSRVVKVKVHPRDVVSIPIDYNDAKMRTCQYEVVEDVTEQFK.

Its subcellular location is the host cell inner membrane. In terms of biological role, transcribed prior to replication. This protein form parts of the replication complex and has DNA-binding properties. This chain is Protein rIIB (rIIB), found in Escherichia coli (Bacteriophage T4).